Consider the following 604-residue polypeptide: Transcriptional repressor rco-1 (604 aa).

Disordered regions lie at residues 87–110 (RGGAPGNMNPPPQHPGQQQPPAIG) and 124–264 (GGQA…DRLP). Positions 144 to 163 (MPAPPGLQGPPPPPPPPSQQ) are enriched in pro residues. 2 stretches are compositionally biased toward low complexity: residues 164-177 (PPFQQQYQGPQGPG) and 190-209 (PGPAGKRGIGRPPAGGPATP). A compositionally biased stretch (polar residues) spans 210-229 (QINTPIPYNGGPAQSPQVPT). WD repeat units lie at residues 295–324 (QHESVVCCVRFSMDGKYVATGCNRSAQIYD), 342–372 (TGDLYIRSVCFSPDGKYLATGAEDKLIRVWD), 384–414 (GHEQDIYSLDFSRDGRTIASGSGDRTVRLWD), 425–455 (SIEDGVTTVAISPDKQFVAAGSLDKSVRVWD), 469–499 (GHKDSVYSVAFSPDGRNLVSGSLDKTIKMWE), 523–553 (GHRDFVLSVALTPDSQWVLSGSKDRGVQFWD), and 565–600 (GHKNSVISVAPSPVTGPNGVGYFATGSGDMRARIWS).

Its function is as follows. Represses transcription by RNA polymerase II. May be involved at several stages of conidiation and other growth and development processes. Appears to regulate genes that are expressed in asexual and sexual spore pathways. This is Transcriptional repressor rco-1 (rco-1) from Neurospora crassa (strain ATCC 24698 / 74-OR23-1A / CBS 708.71 / DSM 1257 / FGSC 987).